Here is a 344-residue protein sequence, read N- to C-terminus: Sesquiterpene synthase 9 (344 aa).

Residues Asp-88, Asn-224, Ser-228, and Glu-232 each coordinate Mg(2+). The short motif at 88–92 is the DDXXD motif element; that stretch reads DEYSD. The NSE/DTE motif signature appears at 224–232; that stretch reads NDMLSWNVE. (2E,6E)-farnesyl diphosphate contacts are provided by Arg-313 and Tyr-314.

Belongs to the terpene synthase family. The cofactor is Mg(2+).

Its function is as follows. Terpene cyclase that catalyzes the cyclization of farnesyl diphosphate (FPP) to a single major sesquiterpene scaffold whose chemical structure is still unknown. This Postia placenta (strain ATCC 44394 / Madison 698-R) (Brown rot fungus) protein is Sesquiterpene synthase 9.